The sequence spans 144 residues: Prefoldin subunit alpha (144 aa).

Belongs to the prefoldin subunit alpha family. Heterohexamer of two alpha and four beta subunits.

The protein localises to the cytoplasm. Functionally, molecular chaperone capable of stabilizing a range of proteins. Seems to fulfill an ATP-independent, HSP70-like function in archaeal de novo protein folding. This Methanococcus maripaludis (strain DSM 14266 / JCM 13030 / NBRC 101832 / S2 / LL) protein is Prefoldin subunit alpha.